A 534-amino-acid chain; its full sequence is Solute carrier family 22 member 15 (534 aa).

The chain crosses the membrane as a helical span at residues 22–42; the sequence is FLLAVLLQLYSATEAIIITIL. N-linked (GlcNAc...) asparagine glycosylation is found at Asn-52, Asn-58, and Asn-83. 11 helical membrane passes run 97 to 117, 136 to 156, 161 to 181, 191 to 211, 216 to 236, 297 to 317, 327 to 347, 356 to 376, 391 to 411, 424 to 444, and 450 to 470; these read AAYEVSVSSSVYFGGVLIGVI, LALEVVFAVMNALTPIFPLFL, LVGVMNGGMSLVAFVLLNECI, SLGSLCFAVGIAQFALIGYFI, LLALLVNVQGAAVLALSLCIP, TLIMMWVWFVCSLVYYGLTLS, LNLALSGLAELPAYPLCMYLI, GSLAGFLCVGGGACLLIMLVP, TLSLLGKLNISAAFNIVYIYS, MGVCSMFSRIGGIIAPFIPAL, and ALPFIVFGAAGVSAGLLSLLL. N-linked (GlcNAc...) asparagine glycosylation is present at Asn-513.

Belongs to the major facilitator (TC 2.A.1) superfamily. Organic cation transporter (TC 2.A.1.19) family.

The protein resides in the membrane. Probably transports organic cations. This chain is Solute carrier family 22 member 15 (slc22a15), found in Xenopus tropicalis (Western clawed frog).